A 117-amino-acid polypeptide reads, in one-letter code: Large ribosomal subunit protein eL8 (117 aa).

This sequence belongs to the eukaryotic ribosomal protein eL8 family. Part of the 50S ribosomal subunit. Probably part of the RNase P complex.

Its subcellular location is the cytoplasm. Its function is as follows. Multifunctional RNA-binding protein that recognizes the K-turn motif in ribosomal RNA, the RNA component of RNase P, box H/ACA, box C/D and box C'/D' sRNAs. The sequence is that of Large ribosomal subunit protein eL8 from Methanococcus aeolicus (strain ATCC BAA-1280 / DSM 17508 / OCM 812 / Nankai-3).